The sequence spans 560 residues: Dimethylaniline monooxygenase [N-oxide-forming] 4 (560 aa).

FAD-binding positions include 9–13 (GAGVS), E32, and 40–41 (LW). Residues 60 to 61 (TN) and 195 to 198 (TGGD) each bind NADP(+). A helical membrane pass occupies residues 510-530 (LSHYLIAWGAPVLLVSLLLIY).

The protein belongs to the FMO family. It depends on FAD as a cofactor.

It localises to the microsome membrane. The protein localises to the endoplasmic reticulum membrane. It carries out the reaction N,N-dimethylaniline + NADPH + O2 + H(+) = N,N-dimethylaniline N-oxide + NADP(+) + H2O. Its function is as follows. This protein is involved in the oxidative metabolism of a variety of xenobiotics such as drugs and pesticides. The protein is Dimethylaniline monooxygenase [N-oxide-forming] 4 (Fmo4) of Mus musculus (Mouse).